The sequence spans 146 residues: Peptidyl-lysine N-acetyltransferase YiaC (146 aa).

The N-acetyltransferase domain maps to 1 to 143 (MIREAQRSEL…PTWIMSWPVV (143 aa)).

The protein belongs to the acetyltransferase family.

It catalyses the reaction L-lysyl-[protein] + acetyl-CoA = N(6)-acetyl-L-lysyl-[protein] + CoA + H(+). Functionally, N-epsilon-lysine acetyltransferase that catalyzes acetylation of a large number of proteins. Overexpression inhibits motility. This is Peptidyl-lysine N-acetyltransferase YiaC (yiaC) from Escherichia coli (strain K12).